Reading from the N-terminus, the 243-residue chain is Probable aquaporin SIP1-2 (243 aa).

Helical transmembrane passes span 12–32 (VITF…AAIV) and 42–62 (WAPL…FTVI). The NPA 1 signature appears at 72–74 (NPC). 3 helical membrane-spanning segments follow: residues 90–110 (FSLA…AITI), 135–155 (GAIS…LIIL), and 162–182 (LAKT…GSKF). The NPA 2 signature appears at 188–190 (NPA). The chain crosses the membrane as a helical span at residues 210–230 (VYWISSYTGAILSAMLFRIIF).

The protein belongs to the MIP/aquaporin (TC 1.A.8) family. SIP (TC 1.A.8.10) subfamily. As to expression, expressed in roots and above ground. Expressed in elongating regions of the root tips, cotyledons, minor veins and hydathode cells of the rosette leaves. Weakly expressed in vascular tissues of the flower petals, filaments of stamens, upper part of the styles and receptacles of the siliques.

The protein resides in the endoplasmic reticulum membrane. Functionally, water channel required to facilitate the transport of water across cell membrane. The protein is Probable aquaporin SIP1-2 (SIP1-2) of Arabidopsis thaliana (Mouse-ear cress).